Here is a 476-residue protein sequence, read N- to C-terminus: tRNA-2-methylthio-N(6)-dimethylallyladenosine synthase (476 aa).

Positions 5 to 122 (KKLYIKTWGC…LPEMINQVKG (118 aa)) constitute an MTTase N-terminal domain. The [4Fe-4S] cluster site is built by Cys-14, Cys-51, Cys-85, Cys-159, Cys-163, and Cys-166. The Radical SAM core domain maps to 145–377 (RAEGPSAFVS…QQRINQQAMS (233 aa)). The TRAM domain occupies 380 to 443 (RAMLGSVQRI…ANSLRGKVIR (64 aa)).

Belongs to the methylthiotransferase family. MiaB subfamily. As to quaternary structure, monomer. It depends on [4Fe-4S] cluster as a cofactor.

The protein resides in the cytoplasm. It catalyses the reaction N(6)-dimethylallyladenosine(37) in tRNA + (sulfur carrier)-SH + AH2 + 2 S-adenosyl-L-methionine = 2-methylsulfanyl-N(6)-dimethylallyladenosine(37) in tRNA + (sulfur carrier)-H + 5'-deoxyadenosine + L-methionine + A + S-adenosyl-L-homocysteine + 2 H(+). Its function is as follows. Catalyzes the methylthiolation of N6-(dimethylallyl)adenosine (i(6)A), leading to the formation of 2-methylthio-N6-(dimethylallyl)adenosine (ms(2)i(6)A) at position 37 in tRNAs that read codons beginning with uridine. In Photorhabdus laumondii subsp. laumondii (strain DSM 15139 / CIP 105565 / TT01) (Photorhabdus luminescens subsp. laumondii), this protein is tRNA-2-methylthio-N(6)-dimethylallyladenosine synthase.